The sequence spans 199 residues: Large ribosomal subunit protein uL18 (199 aa).

Belongs to the universal ribosomal protein uL18 family. As to quaternary structure, part of the 50S ribosomal subunit. Contacts the 5S and 23S rRNAs.

Its function is as follows. This is one of the proteins that bind and probably mediate the attachment of the 5S RNA into the large ribosomal subunit, where it forms part of the central protuberance. This chain is Large ribosomal subunit protein uL18, found in Saccharolobus solfataricus (strain ATCC 35092 / DSM 1617 / JCM 11322 / P2) (Sulfolobus solfataricus).